The sequence spans 60 residues: Large ribosomal subunit protein bL32 (60 aa).

The protein belongs to the bacterial ribosomal protein bL32 family.

In Ehrlichia ruminantium (strain Gardel), this protein is Large ribosomal subunit protein bL32.